The sequence spans 775 residues: MNTIRSQWKDIVTSKKLLIPIIAILFVPLIYSGVFLKAYWDPYGTVDQLPVVVVNQDKGATYEGEKLQIGDDLVKELKDNNNFDWHFSNDLDQSLKDLLNQKYYLVVEIPEDFSKNASTVLDKNPKKLDLKYHTNAGSNYVGATIGEKAIDKLKASVSKEVTEQYTKVIFDNFKDIAKGLSDASSGAKKIDDGTKDAKNGSAQLKENLAKLKESTATISDKTAQLADGAAQVTSGIQSLDSSLGKFQDSSNQIYDKSSQLAAGSGELTSKMNELLAGLQNVQKGTPNLTNGLDQLNSKVQEGSEKAAKAEKIINALDLTKLETAVNNLEKSETAMKEFKKQLTDFENSLKNRDQAFKNVINSSDFLTAEQKSQLINSVEKKLPQVDAPDFDQILSQLPTADQLPDIATIKSSLEDVKAQVAQVKAMPEATSKLYNGAKTIQDAIDRLTEGADKIYNGSQKLTDGQTKLTAGIGEYNKQFAKAKAGSEQLVTGSSQVSGGLFKLLDGSKQVQSGSSKLADGSASLDTGLGKLLDGTGELSSKLKDAADQTGDIDADDQTYGMFADPVKTKDDAIHSVPNYGTGLTPYILSMGLYVGGIMLTVVFPLKEASGRPRNGFEWFFSKFNVMMLVGIIQSLIVATVLLLGIGLEVESTWRFYVFTIITSLAFLAIIQFLATTMGNPGRFIAVIILVLQLGASGGTFPLELLPNFYQVIHGALPMTYSINGFRAVISNGDFGYMWQMAGVLIGIALVMIALSITYFTMLSRKEETSEEQPAS.

5 consecutive transmembrane segments (helical) span residues 16-36 (KLLI…GVFL), 585-605 (PYIL…VFPL), 625-645 (VMML…LLGI), 655-675 (FYVF…FLAT), and 742-762 (GVLI…FTML).

The protein to L.lactis phage infection protein (PIP).

The protein localises to the cell membrane. This is an uncharacterized protein from Bacillus subtilis (strain 168).